The following is a 444-amino-acid chain: Ribosome biogenesis protein WDR12 homolog (444 aa).

Positions 7 to 87 are ubiquitin-like (UBL) domain; sequence VLVKFVTKLP…ESTLEVEYVP (81 aa). Residues 91-123 form a disordered region; the sequence is PPQQKNSTPHDDWVSSVDGSRCAPASSSGGSPS. WD repeat units follow at residues 105 to 148, 150 to 191, and 203 to 242; these read SSVD…VASV, AHAG…EEDA, and GHED…RWAA. Residues 243 to 264 are disordered; it reads GTAEASKKKRKTGTANGSAAAG. 4 WD repeats span residues 272–310, 312–352, 360–400, and 403–444; these read GHLH…AADT, NGSK…GSDA, AHGG…PLGM, and HHTD…YIVS.

The protein belongs to the WD repeat WDR12/YTM1 family.

Its subcellular location is the nucleus. The protein localises to the nucleolus. The protein resides in the nucleoplasm. Required for maturation of ribosomal RNAs and formation of the large ribosomal subunit. This Chlamydomonas reinhardtii (Chlamydomonas smithii) protein is Ribosome biogenesis protein WDR12 homolog.